The following is a 207-amino-acid chain: MEENRDVKNEELEKEEIADEVAEKDNETQESNDAAETNEASKEASENIEAAEEDQEDLVKNQEEENKKLREELDATKDRLLRLTAEYDNYRKRTAKEKEGIYSDAYVDVLKEIVPILDNLERAVAADGSIEDLKKGIEMTIKGCKDSFAKLGVEEIDATGEFDPNLHNAVMHIEDEELGKNVVAEVFQKGYKKDDKIIRHTMVKVAN.

2 stretches are compositionally biased toward basic and acidic residues: residues Met-1–Glu-11 and Asp-57–Asn-66. A disordered region spans residues Met-1–Asn-66.

Belongs to the GrpE family. As to quaternary structure, homodimer.

The protein localises to the cytoplasm. In terms of biological role, participates actively in the response to hyperosmotic and heat shock by preventing the aggregation of stress-denatured proteins, in association with DnaK and GrpE. It is the nucleotide exchange factor for DnaK and may function as a thermosensor. Unfolded proteins bind initially to DnaJ; upon interaction with the DnaJ-bound protein, DnaK hydrolyzes its bound ATP, resulting in the formation of a stable complex. GrpE releases ADP from DnaK; ATP binding to DnaK triggers the release of the substrate protein, thus completing the reaction cycle. Several rounds of ATP-dependent interactions between DnaJ, DnaK and GrpE are required for fully efficient folding. The chain is Protein GrpE from Clostridium beijerinckii (strain ATCC 51743 / NCIMB 8052) (Clostridium acetobutylicum).